The primary structure comprises 449 residues: Delta(8)-fatty-acid desaturase 2 (449 aa).

The 85-residue stretch at 7–91 (KRYVTSEDLK…VRDHHVSDVS (85 aa)) folds into the Cytochrome b5 heme-binding domain. Heme is bound by residues His-42 and His-65. Helical transmembrane passes span 113-133 (VTLY…YGVL) and 138-158 (IWAH…SAYV). The short motif at 160 to 164 (HDSGH) is the Histidine box-1 element. Residues 176–196 (LIQLLSGNCLTGISIAWWKWT) traverse the membrane as a helical segment. Residues 197–201 (HNAHH) carry the Histidine box-2 motif. The next 3 helical transmembrane spans lie at 255–275 (FYPV…LLLF), 284–304 (ALNI…VSFL), and 311–331 (FIFV…FCLN). The short motif at 374–378 (QLEHH) is the Histidine box-3 element.

Belongs to the fatty acid desaturase type 1 family. Requires Fe cation as cofactor. Highly expressed in flowers and siliques. Expressed at low levels in roots, leaves and stems.

The protein resides in the endoplasmic reticulum membrane. The enzyme catalyses an N-acyl-(4R)-4-hydroxysphinganine + 2 Fe(II)-[cytochrome b5] + O2 + 2 H(+) = a (4R,8E)-4-hydroxysphingenine ceramide + 2 Fe(III)-[cytochrome b5] + 2 H2O. It carries out the reaction an N-acyl-(4R)-4-hydroxysphinganine + 2 Fe(II)-[cytochrome b5] + O2 + 2 H(+) = a (4R,8Z)-4-hydroxysphing-8-enine ceramide + 2 Fe(III)-[cytochrome b5] + 2 H2O. Its function is as follows. Plays a major role as delta(8)-fatty-acid desaturase which introduces a double bond at the 8-position in the long-chain base (LCB) of ceramides with or without a hydroxy group at the 4-position. The enzyme produces both the 8E and 8Z isomers (in a 4:1 ratio). This structural modification contributes to the quantitative partitioning of ceramides between the two major sphingolipid classes, glucosylceramides and glycosylinositolphosphoryl ceramides. Sphingolipids are important membrane components involved in environmental stress responses, such as resistance to chilling, and act as cell signaling molecules. The chain is Delta(8)-fatty-acid desaturase 2 (SLD2) from Arabidopsis thaliana (Mouse-ear cress).